We begin with the raw amino-acid sequence, 118 residues long: MARIAGINIPDKKHAVIALTSIYGIGRTTALDICAKTGVSAAVKISELSEKQIEELREQVAKYTVEGDLRREVTLNIKRLMDIGTYRGLRHRRGLPVRGQRTKTNARTRKGPRKPIKK.

A disordered region spans residues 91-118 (HRRGLPVRGQRTKTNARTRKGPRKPIKK).

Belongs to the universal ribosomal protein uS13 family. Part of the 30S ribosomal subunit. Forms a loose heterodimer with protein S19. Forms two bridges to the 50S subunit in the 70S ribosome.

In terms of biological role, located at the top of the head of the 30S subunit, it contacts several helices of the 16S rRNA. In the 70S ribosome it contacts the 23S rRNA (bridge B1a) and protein L5 of the 50S subunit (bridge B1b), connecting the 2 subunits; these bridges are implicated in subunit movement. Contacts the tRNAs in the A and P-sites. The protein is Small ribosomal subunit protein uS13 of Hamiltonella defensa subsp. Acyrthosiphon pisum (strain 5AT).